A 468-amino-acid chain; its full sequence is Adenosylhomocysteinase (468 aa).

Substrate is bound by residues T57, D132, and E194. 195 to 197 (TTT) contacts NAD(+). Substrate contacts are provided by K224 and D228. NAD(+)-binding positions include N229, 258–263 (GFGDVG), E281, N316, 337–339 (IGH), and N382.

The protein belongs to the adenosylhomocysteinase family. NAD(+) is required as a cofactor.

It localises to the cytoplasm. The enzyme catalyses S-adenosyl-L-homocysteine + H2O = L-homocysteine + adenosine. Its pathway is amino-acid biosynthesis; L-homocysteine biosynthesis; L-homocysteine from S-adenosyl-L-homocysteine: step 1/1. May play a key role in the regulation of the intracellular concentration of adenosylhomocysteine. This is Adenosylhomocysteinase from Methylorubrum populi (strain ATCC BAA-705 / NCIMB 13946 / BJ001) (Methylobacterium populi).